Consider the following 504-residue polypeptide: Probable ergothioneine transporter EgtUBC (504 aa).

One can recognise an ABC transmembrane type-1 domain in the interval 19-198; it reads MIEHIQISFI…LLAIIFDLIL (180 aa). 6 helical membrane passes run 25–45, 49–69, 70–90, 145–165, 178–198, and 209–229; these read ISFI…ILLT, TISE…SLAL, LGLM…ALVV, AMVL…GGLG, SLIL…DLIL, and LLMT…IPMF. The tract at residues 231-504 is ergothioneine binding domain; it reads QKGDKITLAG…DYLKAKGLIK (274 aa).

In the N-terminal section; belongs to the binding-protein-dependent transport system permease family. This sequence in the C-terminal section; belongs to the OsmX family. In terms of assembly, the complex is probably composed of at least an ATP-binding protein (EgtUA) and a transmembrane protein (EgtUBC).

The protein localises to the membrane. In terms of biological role, part of an ABC transporter complex EgtU required for the uptake of ergothioneine (EGT), a natural low-molecular weight (LMW) thiol antioxidant. Responsible for the translocation of the substrate across the membrane. Also contains a C-terminal periplasmic solute-binding domain (SBD) which binds to EGT with sub-micromolar affinity. Probably does not bind L-hercynine. The chain is Probable ergothioneine transporter EgtUBC (egtUBC) from Staphylococcus aureus (strain USA300).